The primary structure comprises 323 residues: ADP-ribose glycohydrolase MACROD1 (323 aa).

N6-succinyllysine occurs at positions 94, 101, and 127. Lys136 is covalently cross-linked (Glycyl lysine isopeptide (Lys-Gly) (interchain with G-Cter in SUMO2)). The 182-residue stretch at 139–320 (DPKYKKDKQL…IYRERLPHYF (182 aa)) folds into the Macro domain. 157-159 (GDI) contacts substrate. Lys161 carries the post-translational modification N6-acetyllysine. Substrate is bound by residues 170-172 (AAN), 177-182 (GGGGVD), 265-271 (ISTGVFG), and Phe304.

This sequence belongs to the MacroD-type family. MacroD1/2-like subfamily. In terms of assembly, interacts with ESR1; Interacts in a manner that is estrogen independent but is enhanced by estrogen. Interacts (via macro domain) with AR.

It is found in the nucleus. It carries out the reaction 3''-O-acetyl-ADP-D-ribose + H2O = ADP-D-ribose + acetate + H(+). The enzyme catalyses 2''-O-acetyl-ADP-D-ribose + H2O = ADP-D-ribose + acetate + H(+). The catalysed reaction is 4-O-(ADP-D-ribosyl)-L-aspartyl-[protein] + H2O = L-aspartyl-[protein] + ADP-D-ribose + H(+). It catalyses the reaction 5-O-(ADP-D-ribosyl)-L-glutamyl-[protein] + H2O = L-glutamyl-[protein] + ADP-D-ribose + H(+). It carries out the reaction alpha-NAD(+) + H2O = ADP-D-ribose + nicotinamide + H(+). With respect to regulation, subject to competitive inhibition by the product ADP-ribose. In terms of biological role, removes ADP-ribose from aspartate and glutamate residues in proteins bearing a single ADP-ribose moiety. Inactive towards proteins bearing poly-ADP-ribose. Deacetylates O-acetyl-ADP ribose, a signaling molecule generated by the deacetylation of acetylated lysine residues in histones and other proteins. Plays a role in estrogen signaling. Binds to androgen receptor (AR) and amplifies the transactivation function of AR in response to androgen. May play an important role in carcinogenesis and/or progression of hormone-dependent cancers by feed-forward mechanism that activates ESR1 transactivation. Could be an ESR1 coactivator, providing a positive feedback regulatory loop for ESR1 signal transduction. Could be involved in invasive growth by down-regulating CDH1 in endometrial cancer cells. Enhances ESR1-mediated transcription activity. This Mus musculus (Mouse) protein is ADP-ribose glycohydrolase MACROD1.